We begin with the raw amino-acid sequence, 103 residues long: uncharacterized protein (103 aa).

The disordered stretch occupies residues 1 to 103 (MAGARRRARC…WRGGSCTSQR (103 aa)). 2 stretches are compositionally biased toward basic residues: residues 55–65 (RRPGPGRRARS) and 74–84 (RPPHSRTRARR).

The protein belongs to the epstein-barr virus RPMS1 family.

This is an uncharacterized protein from Epstein-Barr virus (strain GD1) (HHV-4).